Reading from the N-terminus, the 98-residue chain is Large ribosomal subunit protein uL23 (98 aa).

The protein belongs to the universal ribosomal protein uL23 family. Part of the 50S ribosomal subunit. Contacts protein L29, and trigger factor when it is bound to the ribosome.

In terms of biological role, one of the early assembly proteins it binds 23S rRNA. One of the proteins that surrounds the polypeptide exit tunnel on the outside of the ribosome. Forms the main docking site for trigger factor binding to the ribosome. The chain is Large ribosomal subunit protein uL23 from Rickettsia africae (strain ESF-5).